Consider the following 618-residue polypeptide: 2-succinyl-5-enolpyruvyl-6-hydroxy-3-cyclohexene-1-carboxylate synthase (618 aa).

The interval 192 to 215 (DPVAERGRDGPYVDVTPGSPEPGD) is disordered.

Belongs to the TPP enzyme family. MenD subfamily. As to quaternary structure, homodimer. Mg(2+) is required as a cofactor. The cofactor is Mn(2+). Requires thiamine diphosphate as cofactor.

The catalysed reaction is isochorismate + 2-oxoglutarate + H(+) = 5-enolpyruvoyl-6-hydroxy-2-succinyl-cyclohex-3-ene-1-carboxylate + CO2. It functions in the pathway quinol/quinone metabolism; 1,4-dihydroxy-2-naphthoate biosynthesis; 1,4-dihydroxy-2-naphthoate from chorismate: step 2/7. Its pathway is quinol/quinone metabolism; menaquinone biosynthesis. Functionally, catalyzes the thiamine diphosphate-dependent decarboxylation of 2-oxoglutarate and the subsequent addition of the resulting succinic semialdehyde-thiamine pyrophosphate anion to isochorismate to yield 2-succinyl-5-enolpyruvyl-6-hydroxy-3-cyclohexene-1-carboxylate (SEPHCHC). The chain is 2-succinyl-5-enolpyruvyl-6-hydroxy-3-cyclohexene-1-carboxylate synthase from Halorubrum lacusprofundi (strain ATCC 49239 / DSM 5036 / JCM 8891 / ACAM 34).